The chain runs to 387 residues: Major outer membrane porin (387 aa).

The first 22 residues, 1-22, serve as a signal peptide directing secretion; sequence MKKLLKSVLAFAVLGSASSLHA.

The protein belongs to the chlamydial porin (CP) (TC 1.B.2) family. In terms of assembly, part of a disulfide cross-linked outer membrane complex (COMC) composed of the major outer membrane porin (MOMP), the small cysteine-rich protein (OmcA) and the large cysteine-rich periplasmic protein (OmcB).

Its subcellular location is the cell outer membrane. In terms of biological role, in elementary bodies (EBs, the infectious stage, which is able to survive outside the host cell) provides the structural integrity of the outer envelope through disulfide cross-links with the small cysteine-rich protein and the large cysteine-rich periplasmic protein. It has been described in publications as the Sarkosyl-insoluble COMC (Chlamydia outer membrane complex), and serves as the functional equivalent of peptidoglycan. Its function is as follows. Permits diffusion of specific solutes through the outer membrane. The protein is Major outer membrane porin (ompA) of Chlamydia muridarum (strain MoPn / Nigg).